Reading from the N-terminus, the 117-residue chain is Con-Ins T3 (117 aa).

Positions 1–24 (MTTSFYFLLMALGLLLYVCQSSFG) are cleaved as a signal peptide. The propeptide occupies 25 to 29 (NQHTR). At Pro-34 the chain carries 4-hydroxyproline; partial. Disulfide bonds link Cys-38–Cys-101, Cys-50–Cys-114, and Cys-100–Cys-105. Positions 53 to 94 (KRNDAGKKRGQASPLWQRGGSLSMLKARAKRNEAFHLQRAHR) are cleaved as a propeptide — c peptide. The residue at position 98 (Glu-98) is a 4-carboxyglutamate. Residue Glu-109 is modified to 4-carboxyglutamate; partial. Residue Cys-114 is modified to Cysteine amide. The propeptide occupies 116 to 117 (NS).

It belongs to the insulin family. Heterodimer of A and B chains; disulfide-linked. In terms of tissue distribution, expressed by the venom gland.

The protein localises to the secreted. This venom insulin facilitates prey capture by rapidly inducing hypoglycemic shock. It is one of the smallest known insulin found in nature and lacks the C-terminal segment of the B chain that, in human insulin, mediates engagement of the insulin receptor (INSR) and assembly of the hormone's hexameric storage form. Despite lacking this segment, it both binds and activates human insulin receptor (long isoform (HIR-B) OF INSR) with only a 10-fold lower potency. In vivo, intraperitoneal injection of this peptide into zebrafish lowers blood glucose with the same potency than human insulin. In addition, when applied to water, this peptide reduces overall locomotor activity of zebrafish larvae, observed as a significant decrease in the percentage of time spent swimming and movement frequency. This Conus tulipa (Fish-hunting cone snail) protein is Con-Ins T3.